The following is a 249-amino-acid chain: Salivary antigen-5 (249 aa).

The N-terminal stretch at 1–26 (MAKTQCPLVFSLLALALIGTLQSSAA) is a signal peptide. Residues 50–193 (SIHNYYRNLT…WYAGYLVCNY (144 aa)) enclose the SCP domain. Asn-57, Asn-127, and Asn-168 each carry an N-linked (GlcNAc...) asparagine glycan.

It belongs to the CRISP family. Venom allergen 5-like subfamily. As to quaternary structure, monomeric in solution. Requires Cu(2+) as cofactor. As to expression, saliva (at protein level). Salivary gland (at protein level).

The protein localises to the secreted. Antioxidant protein that scavenges superoxide radicals. Removes superoxide radicals produced by PMA-stimulated host neutrophils. Inhibits host platelet aggregation induced by low doses of collagen by interfering with the pro-aggregatory properties of reactive oxygen species on platelets. Binds to heparin and sulfated glycosaminoglycans. This chain is Salivary antigen-5, found in Dipetalogaster maximus (Blood-sucking bug).